The chain runs to 284 residues: Bifunctional protein FolD (284 aa).

NADP(+)-binding positions include 165 to 167, serine 190, and isoleucine 231; that span reads GRS.

This sequence belongs to the tetrahydrofolate dehydrogenase/cyclohydrolase family. Homodimer.

It carries out the reaction (6R)-5,10-methylene-5,6,7,8-tetrahydrofolate + NADP(+) = (6R)-5,10-methenyltetrahydrofolate + NADPH. The catalysed reaction is (6R)-5,10-methenyltetrahydrofolate + H2O = (6R)-10-formyltetrahydrofolate + H(+). It participates in one-carbon metabolism; tetrahydrofolate interconversion. Functionally, catalyzes the oxidation of 5,10-methylenetetrahydrofolate to 5,10-methenyltetrahydrofolate and then the hydrolysis of 5,10-methenyltetrahydrofolate to 10-formyltetrahydrofolate. This is Bifunctional protein FolD from Clostridium kluyveri (strain ATCC 8527 / DSM 555 / NBRC 12016 / NCIMB 10680 / K1).